A 473-amino-acid polypeptide reads, in one-letter code: Photosystem II CP43 reaction center protein (473 aa).

Residues 1–14 (MKTLYSLRRFYHVE) constitute a propeptide that is removed on maturation. Thr-15 carries the N-acetylthreonine modification. At Thr-15 the chain carries Phosphothreonine. 5 helical membrane-spanning segments follow: residues 69–93 (LFEVAHFVPEKPMYEQGLILLPHLA), 134–155 (LLGPETLEESFPFFGYVWKDRN), 178–200 (KASYFGGIYDTWAPGGGDVRKIT), 255–275 (KPFAWARRALVWSGEAYLSYS), and 291–312 (WFNNTAYPSEFYGPTGPEASQA). Glu-367 contacts [CaMn4O5] cluster. The chain crosses the membrane as a helical span at residues 447–471 (RARAAAAGFEKGIDRDFEPVLSMTP).

This sequence belongs to the PsbB/PsbC family. PsbC subfamily. PSII is composed of 1 copy each of membrane proteins PsbA, PsbB, PsbC, PsbD, PsbE, PsbF, PsbH, PsbI, PsbJ, PsbK, PsbL, PsbM, PsbT, PsbX, PsbY, PsbZ, Psb30/Ycf12, at least 3 peripheral proteins of the oxygen-evolving complex and a large number of cofactors. It forms dimeric complexes. Requires Binds multiple chlorophylls and provides some of the ligands for the Ca-4Mn-5O cluster of the oxygen-evolving complex. It may also provide a ligand for a Cl- that is required for oxygen evolution. PSII binds additional chlorophylls, carotenoids and specific lipids. as cofactor.

It localises to the plastid. It is found in the chloroplast thylakoid membrane. Its function is as follows. One of the components of the core complex of photosystem II (PSII). It binds chlorophyll and helps catalyze the primary light-induced photochemical processes of PSII. PSII is a light-driven water:plastoquinone oxidoreductase, using light energy to abstract electrons from H(2)O, generating O(2) and a proton gradient subsequently used for ATP formation. In Cicer arietinum (Chickpea), this protein is Photosystem II CP43 reaction center protein.